Here is a 226-residue protein sequence, read N- to C-terminus: MLTWLQRNSLTFPPLEKAMRDPNGLLAAGGDLSADRLIQAYRHGCFPWFSEGQPILWWSPDPRTVLFPDELHVSRSLGKLMRKQRYRVTFDQDFDAVIRACAAPREYADGTWITEAMQDAYIELHRRGFAHSVEVWDEGELVGGLYGLAMGQLFFGESMFSRADNASKYGFATLVQHLREAGFVLIDCQMPTDHLHSLGARAISRQTFADYLARHLDQPNHATWVC.

The protein belongs to the L/F-transferase family.

The protein localises to the cytoplasm. It catalyses the reaction N-terminal L-lysyl-[protein] + L-leucyl-tRNA(Leu) = N-terminal L-leucyl-L-lysyl-[protein] + tRNA(Leu) + H(+). The enzyme catalyses N-terminal L-arginyl-[protein] + L-leucyl-tRNA(Leu) = N-terminal L-leucyl-L-arginyl-[protein] + tRNA(Leu) + H(+). It carries out the reaction L-phenylalanyl-tRNA(Phe) + an N-terminal L-alpha-aminoacyl-[protein] = an N-terminal L-phenylalanyl-L-alpha-aminoacyl-[protein] + tRNA(Phe). Functionally, functions in the N-end rule pathway of protein degradation where it conjugates Leu, Phe and, less efficiently, Met from aminoacyl-tRNAs to the N-termini of proteins containing an N-terminal arginine or lysine. This is Leucyl/phenylalanyl-tRNA--protein transferase from Pseudomonas fluorescens (strain Pf0-1).